The sequence spans 422 residues: Trigger factor (422 aa).

The PPIase FKBP-type domain maps to 158-242 (GDFAVVSLES…VKGLRKKELP (85 aa)).

The protein belongs to the FKBP-type PPIase family. Tig subfamily.

The protein resides in the cytoplasm. It carries out the reaction [protein]-peptidylproline (omega=180) = [protein]-peptidylproline (omega=0). Its function is as follows. Involved in protein export. Acts as a chaperone by maintaining the newly synthesized protein in an open conformation. Functions as a peptidyl-prolyl cis-trans isomerase. The chain is Trigger factor from Solibacter usitatus (strain Ellin6076).